Here is a 734-residue protein sequence, read N- to C-terminus: Polyphosphate kinase (734 aa).

Residue Asn67 coordinates ATP. Residues Arg392 and Arg422 each contribute to the Mg(2+) site. The PLD phosphodiesterase domain occupies Thr447–Thr481. His452 acts as the Phosphohistidine intermediate in catalysis. Residues Tyr485, Arg581, and His609 each contribute to the ATP site. A disordered region spans residues Lys705–Arg734.

The protein belongs to the polyphosphate kinase 1 (PPK1) family. It depends on Mg(2+) as a cofactor. Post-translationally, an intermediate of this reaction is the autophosphorylated ppk in which a phosphate is covalently linked to a histidine residue through a N-P bond.

It catalyses the reaction [phosphate](n) + ATP = [phosphate](n+1) + ADP. Its function is as follows. Catalyzes the reversible transfer of the terminal phosphate of ATP to form a long-chain polyphosphate (polyP). The sequence is that of Polyphosphate kinase from Staphylococcus epidermidis (strain ATCC 12228 / FDA PCI 1200).